The following is a 157-amino-acid chain: Cyclic pyranopterin monophosphate synthase (157 aa).

Substrate contacts are provided by residues 73-75 and 110-111; these read LCH and ME. D125 is an active-site residue.

This sequence belongs to the MoaC family. Homohexamer; trimer of dimers.

The enzyme catalyses (8S)-3',8-cyclo-7,8-dihydroguanosine 5'-triphosphate = cyclic pyranopterin phosphate + diphosphate. It functions in the pathway cofactor biosynthesis; molybdopterin biosynthesis. Functionally, catalyzes the conversion of (8S)-3',8-cyclo-7,8-dihydroguanosine 5'-triphosphate to cyclic pyranopterin monophosphate (cPMP). This chain is Cyclic pyranopterin monophosphate synthase, found in Pseudomonas fluorescens (strain SBW25).